The sequence spans 294 residues: Lipoyl synthase (294 aa).

Residues C35, C40, C46, C61, C65, C68, and S275 each contribute to the [4Fe-4S] cluster site. A Radical SAM core domain is found at 46–264; sequence CWGGGTATVM…REAGLGLGFR (219 aa).

It belongs to the radical SAM superfamily. Lipoyl synthase family. It depends on [4Fe-4S] cluster as a cofactor.

The protein localises to the cytoplasm. It catalyses the reaction [[Fe-S] cluster scaffold protein carrying a second [4Fe-4S](2+) cluster] + N(6)-octanoyl-L-lysyl-[protein] + 2 oxidized [2Fe-2S]-[ferredoxin] + 2 S-adenosyl-L-methionine + 4 H(+) = [[Fe-S] cluster scaffold protein] + N(6)-[(R)-dihydrolipoyl]-L-lysyl-[protein] + 4 Fe(3+) + 2 hydrogen sulfide + 2 5'-deoxyadenosine + 2 L-methionine + 2 reduced [2Fe-2S]-[ferredoxin]. It functions in the pathway protein modification; protein lipoylation via endogenous pathway; protein N(6)-(lipoyl)lysine from octanoyl-[acyl-carrier-protein]: step 2/2. Functionally, catalyzes the radical-mediated insertion of two sulfur atoms into the C-6 and C-8 positions of the octanoyl moiety bound to the lipoyl domains of lipoate-dependent enzymes, thereby converting the octanoylated domains into lipoylated derivatives. This is Lipoyl synthase from Anaeromyxobacter sp. (strain Fw109-5).